The primary structure comprises 1233 residues: Insulin receptor substrate 1 (1233 aa).

At serine 3 the chain carries Phosphoserine. The tract at residues 3–133 (SPPDTDGFSD…AGGGCGGSCS (131 aa)) is mediates interaction with PHIP. In terms of domain architecture, PH spans 12–115 (DVRKVGYLRK…WYQALLQLHN (104 aa)). Serine 99 carries the post-translational modification Phosphoserine; by CK2. The IRS-type PTB domain occupies 155-259 (FKEVWQVILK…EAMRAMSDEF (105 aa)). The segment at 257–425 (DEFRPRSKSQ…SDGGFISSDE (169 aa)) is disordered. Low complexity predominate over residues 264 to 276 (KSQSSSSCSNPIS). A phosphoserine; by RPS6KB1 mark is found at serine 265 and serine 302. Serine 307 carries the post-translational modification Phosphoserine; by IKKB, MAPK8 and RPS6KB1. Residues serine 318, serine 325, serine 340, and serine 343 each carry the phosphoserine modification. Basic residues predominate over residues 349 to 358 (THAHRHRGSS). Low complexity-rich tracts occupy residues 378–399 (SPSA…GSTS) and 407–419 (SSAS…SDGG). A Phosphoserine modification is found at serine 414. A phosphothreonine mark is found at threonine 441 and threonine 448. Tyrosine 460 carries the post-translational modification Phosphotyrosine; by INSR. The YXXM motif 1 signature appears at 460–463 (YICM). Serine 522 carries the phosphoserine; by RPS6KB1 modification. 2 consecutive short sequence motifs (YXXM motif) follow at residues 546-549 (YTEM) and 608-611 (YMPM). At tyrosine 608 the chain carries Phosphotyrosine; by INSR. Serine 612 bears the Phosphoserine mark. Position 628 is a phosphotyrosine; by INSR (tyrosine 628). The YXXM motif 4 signature appears at 628–631 (YMPM). A Phosphoserine; by RPS6KB1 and ROCK2 modification is found at serine 632. Residues 651–720 (QRVDPNGYMM…PPVESGGGKL (70 aa)) form a disordered region. Tyrosine 658 carries the phosphotyrosine modification. The YXXM motif 5 motif lies at 658-661 (YMMM). The span at 662-689 (SPSGSCSPDIGGGSSSSSSISAAPSGSS) shows a compositional bias: low complexity. The YXXM motif 6 motif lies at 727–730 (YMNM). The interval 766–985 (FKHTQRPGEP…VPNSRGDYMT (220 aa)) is disordered. Residues 771 to 780 (RPGEPEEGAR) are compositionally biased toward basic and acidic residues. 2 stretches are compositionally biased toward low complexity: residues 785-794 (RLSSSSGRLR) and 801-810 (DSSSSTSSDS). The residue at position 789 (serine 789) is a Phosphoserine; by AMPK and SIK2. At serine 887 the chain carries Phosphoserine. Residues tyrosine 891, tyrosine 935, and tyrosine 983 each carry the phosphotyrosine; by INSR modification. The tract at residues 891–893 (YVN) is GRB2-binding. 3 short sequence motifs (YXXM motif) span residues 935–938 (YMNM), 983–986 (YMTM), and 1006–1009 (YADM). Residues 1015 to 1137 (AEKASLPRPT…GSEDVKRHSS (123 aa)) are disordered. Low complexity predominate over residues 1032–1042 (STASSSASVTP). 2 stretches are compositionally biased toward polar residues: residues 1043 to 1052 (QGATAEQATH) and 1069 to 1081 (TRVN…NQSA). 2 positions are modified to phosphoserine: serine 1096 and serine 1097. Over residues 1116 to 1129 (AAVGGSGGGGGGGS) the composition is skewed to gly residues. Tyrosine 1173 carries the phosphotyrosine; by INSR modification. The interval 1178–1233 (LAKEHSQDCPSQQQSLPPPPPHQPLGSNEGNSPRRSSEDLSNYASISFQKQPEDRQ) is disordered. Residue lysine 1180 forms a Glycyl lysine isopeptide (Lys-Gly) (interchain with G-Cter in ubiquitin) linkage. Polar residues predominate over residues 1203–1227 (GSNEGNSPRRSSEDLSNYASISFQK). Residue tyrosine 1220 is modified to Phosphotyrosine; by INSR.

As to quaternary structure, interacts (via phosphorylated YXXM motifs) with PIK3R1. Interacts with ROCK1. Interacts with GRB2. Interacts with SOCS7. Interacts (via IRS-type PTB domain) with IGF1R and INSR (via the tyrosine-phosphorylated NPXY motif). Interacts with UBTF and PIK3CA. Interacts (via PH domain) with PHIP. Interacts with FER. Interacts with ALK. Interacts with EIF2AK2/PKR. Interacts with GKAP1. Interacts with DGKZ in the absence of insulin; insulin stimulation decreases this interaction. Found in a ternary complex with DGKZ and PIP5K1A in the absence of insulin stimulation. Interacts with SQSTM1; the interaction is disrupted by the presence of tensin TNS2. Interacts with NCK1 (via SH2 domain). Interacts with NCK2 (via SH3 domain). Interacts with SH2B1; this interaction enhances leptin-induced activation of the PI3-kinase pathway. Interacts with DVL2; this interaction promotes the Wnt/beta-catenin signaling pathway. Serine phosphorylation of IRS1 is a mechanism for insulin resistance. Ser-307 phosphorylation inhibits insulin action through disruption of IRS1 interaction with the insulin receptor. Phosphorylation of Tyr-891 is required for GRB2-binding. Phosphorylated by ALK. Phosphorylated at Ser-265, Ser-302, Ser-632 and Ser-1097 by RPS6KB1; phosphorylation induces accelerated degradation of IRS1. Phosphorylated on tyrosine residues in response to insulin. In skeletal muscles, dephosphorylated on Tyr-608 by TNS2 under anabolic conditions; dephosphorylation results in the proteasomal degradation of IRS1. Post-translationally, ubiquitinated by the Cul7-RING(FBXW8) complex in a mTOR-dependent manner, leading to its degradation: the Cul7-RING(FBXW8) complex recognizes and binds IRS1 previously phosphorylated by S6 kinase (RPS6KB1 or RPS6KB2). Ubiquitinated by TRAF4 through 'Lys-29' linkage; this ubiquitination regulates the interaction of IRS1 with IGFR and IRS1 tyrosine phosphorylation upon IGF1 stimulation. In terms of processing, S-nitrosylation at by BLVRB inhibits its activity. Expressed in osteoblasts, but not in osteoclasts.

It localises to the cytoplasm. It is found in the nucleus. Its function is as follows. Signaling adapter protein that participates in the signal transduction from two prominent receptor tyrosine kinases, insulin receptor/INSR and insulin-like growth factor I receptor/IGF1R. Plays therefore an important role in development, growth, glucose homeostasis as well as lipid metabolism. Upon phosphorylation by the insulin receptor, functions as a signaling scaffold that propagates insulin action through binding to SH2 domain-containing proteins including the p85 regulatory subunit of PI3K, NCK1, NCK2, GRB2 or SHP2. Recruitment of GRB2 leads to the activation of the guanine nucleotide exchange factor SOS1 which in turn triggers the Ras/Raf/MEK/MAPK signaling cascade. Activation of the PI3K/AKT pathway is responsible for most of insulin metabolic effects in the cell, and the Ras/Raf/MEK/MAPK is involved in the regulation of gene expression and in cooperation with the PI3K pathway regulates cell growth and differentiation. Acts a positive regulator of the Wnt/beta-catenin signaling pathway through suppression of DVL2 autophagy-mediated degradation leading to cell proliferation. The sequence is that of Insulin receptor substrate 1 (Irs1) from Mus musculus (Mouse).